Consider the following 1205-residue polypeptide: Partitioning defective 3 homolog B (1205 aa).

Disordered stretches follow at residues 83 to 104 (EPLH…PDAF) and 137 to 165 (VRRS…SLKL). At Ser-100 the chain carries Phosphoserine. One can recognise a PDZ 1 domain in the interval 201 to 289 (TRTVEISGEG…SPSVLLHVLP (89 aa)). Residues 318-374 (VPPPVHGKSGLKTANLTGTDSPETDASASLQQNKSPRVPRLGGKPSSPSLSPLMGFG) form a disordered region. Positions 329-352 (KTANLTGTDSPETDASASLQQNKS) are enriched in polar residues. A phosphoserine mark is found at Ser-346, Ser-352, and Ser-368. The segment covering 356–374 (PRLGGKPSSPSLSPLMGFG) has biased composition (low complexity). 2 consecutive PDZ domains span residues 383–468 (KIDL…VIAR) and 498–585 (EIPL…GMIQ). 7 positions are modified to phosphoserine: Ser-635, Ser-710, Ser-728, Ser-730, Ser-746, Ser-749, and Ser-801. The segment at 707 to 743 (ASKSMDLVPDESKVHSLAGQKSESPSKDFGPTLGLKK) is disordered. Disordered stretches follow at residues 784–921 (AIDK…KHQE) and 1111–1205 (PYYP…TAAV). Over residues 806-822 (HSGQGALNCESAPQGNS) the composition is skewed to polar residues. 2 stretches are compositionally biased toward basic and acidic residues: residues 838-865 (KEKE…DPER) and 881-921 (KKED…KHQE). Residue Ser-1184 is modified to Phosphoserine.

Belongs to the PAR3 family. As to quaternary structure, interacts with PARD6B. Interacts with INSC/inscuteable. In terms of tissue distribution, highly expressed in kidney, lung and skeletal muscle. Expressed at intermediate levels in brain, heart, placenta, liver and pancreas. Isoform 1 is predominant, while isoform 2 and isoform 3 are expressed at lower levels.

It localises to the endomembrane system. The protein localises to the cell junction. Its subcellular location is the tight junction. Functionally, putative adapter protein involved in asymmetrical cell division and cell polarization processes. May play a role in the formation of epithelial tight junctions. In Homo sapiens (Human), this protein is Partitioning defective 3 homolog B (PARD3B).